The following is a 388-amino-acid chain: 1-deoxy-D-xylulose 5-phosphate reductoisomerase (388 aa).

5 residues coordinate NADPH: T15, G16, S17, I18, and N127. K128 is a binding site for 1-deoxy-D-xylulose 5-phosphate. Residue E129 participates in NADPH binding. D153 serves as a coordination point for Mn(2+). 1-deoxy-D-xylulose 5-phosphate is bound by residues S154, E155, S179, and H202. Position 155 (E155) interacts with Mn(2+). G208 lines the NADPH pocket. Positions 215, 220, 221, and 224 each coordinate 1-deoxy-D-xylulose 5-phosphate. Position 224 (E224) interacts with Mn(2+).

Belongs to the DXR family. Mg(2+) serves as cofactor. The cofactor is Mn(2+).

The catalysed reaction is 2-C-methyl-D-erythritol 4-phosphate + NADP(+) = 1-deoxy-D-xylulose 5-phosphate + NADPH + H(+). It functions in the pathway isoprenoid biosynthesis; isopentenyl diphosphate biosynthesis via DXP pathway; isopentenyl diphosphate from 1-deoxy-D-xylulose 5-phosphate: step 1/6. In terms of biological role, catalyzes the NADPH-dependent rearrangement and reduction of 1-deoxy-D-xylulose-5-phosphate (DXP) to 2-C-methyl-D-erythritol 4-phosphate (MEP). The chain is 1-deoxy-D-xylulose 5-phosphate reductoisomerase from Bacteroides fragilis (strain YCH46).